The sequence spans 210 residues: Imidazole glycerol phosphate synthase subunit HisH 1 (210 aa).

Residues 3–210 (KIAIVDYGMC…LDNFLSFSNV (208 aa)) form the Glutamine amidotransferase type-1 domain. Cysteine 82 acts as the Nucleophile in catalysis. Catalysis depends on residues histidine 189 and glutamate 191.

Heterodimer of HisH and HisF.

The protein resides in the cytoplasm. The enzyme catalyses 5-[(5-phospho-1-deoxy-D-ribulos-1-ylimino)methylamino]-1-(5-phospho-beta-D-ribosyl)imidazole-4-carboxamide + L-glutamine = D-erythro-1-(imidazol-4-yl)glycerol 3-phosphate + 5-amino-1-(5-phospho-beta-D-ribosyl)imidazole-4-carboxamide + L-glutamate + H(+). It catalyses the reaction L-glutamine + H2O = L-glutamate + NH4(+). It participates in amino-acid biosynthesis; L-histidine biosynthesis; L-histidine from 5-phospho-alpha-D-ribose 1-diphosphate: step 5/9. Functionally, IGPS catalyzes the conversion of PRFAR and glutamine to IGP, AICAR and glutamate. The HisH subunit provides the glutamine amidotransferase activity that produces the ammonia necessary to HisF for the synthesis of IGP and AICAR. The chain is Imidazole glycerol phosphate synthase subunit HisH 1 (hisH1) from Parasynechococcus marenigrum (strain WH8102).